A 382-amino-acid polypeptide reads, in one-letter code: GDP-mannose transporter 1 (382 aa).

The Cytoplasmic segment spans residues 1–40; that stretch reads MADDKKTNEYTVEMDKLDHGNKNFEAPAPAVRPRGPPAAQ. Residues 41–61 traverse the membrane as a helical segment; sequence LANNPILPVLAYCGSSILMTV. Topologically, residues 62–71 are lumenal; the sequence is MNKYVLSGTD. The chain crosses the membrane as a helical span at residues 72–92; it reads FNLNFFLLCVQSIVCIVAIQT. At 93 to 110 the chain is on the cytoplasmic side; the sequence is CKSSKLITYRDFNSDEAK. The helical transmembrane segment at 111–127 threads the bilayer; the sequence is KWFPITLLLIGMIYTGS. The Lumenal segment spans residues 128–134; sequence KALQYLS. The helical transmembrane segment at 135–151 threads the bilayer; the sequence is IPVYTIFKNLTIILIAY. Residues 152–160 are Cytoplasmic-facing; the sequence is GEVLWFGGS. A helical transmembrane segment spans residues 161–182; sequence VTGMTLFSFGLMVLSSIIAAWA. Over 183–200 the chain is Lumenal; sequence DIKHAVESSGDATAKVST. Residues 201–221 form a helical membrane-spanning segment; it reads LNAGYIWMLINCLCTSSYVLG. Residues 222 to 233 are Cytoplasmic-facing; sequence MRKRIKLTNFKD. A helical transmembrane segment spans residues 234-254; that stretch reads FDTMFYNNLLSIPVLLVLTFL. Residues 255–274 are Lumenal-facing; that stretch reads MEDWSSANIARNFPPADRNG. Residues 275-295 form a helical membrane-spanning segment; that stretch reads ILFAMILSGLSSVFISYTSAW. The Cytoplasmic portion of the chain corresponds to 296-303; that stretch reads CVRVTSST. Residues 304-324 traverse the membrane as a helical segment; it reads TYSMVGALNKLPIALSGLIFF. The Lumenal portion of the chain corresponds to 325 to 327; that stretch reads DAP. The helical transmembrane segment at 328–348 threads the bilayer; sequence VTFPSVSAIVVGFISGIVYAV. Residues 349–382 are Cytoplasmic-facing; that stretch reads AKIKQSAKPKTGVLPMSNPPVSASSQSMRDSLRS. The tract at residues 358–382 is disordered; the sequence is KTGVLPMSNPPVSASSQSMRDSLRS. Polar residues predominate over residues 367 to 382; that stretch reads PPVSASSQSMRDSLRS.

This sequence belongs to the TPT transporter family. SLC35D subfamily. In terms of assembly, homooligomer.

The protein resides in the golgi apparatus membrane. It localises to the cytoplasmic vesicle membrane. The protein localises to the endoplasmic reticulum membrane. Involved in the import of GDP-mannose from the cytoplasm into the Golgi lumen. The polypeptide is GDP-mannose transporter 1 (gmt1) (Neosartorya fischeri (strain ATCC 1020 / DSM 3700 / CBS 544.65 / FGSC A1164 / JCM 1740 / NRRL 181 / WB 181) (Aspergillus fischerianus)).